The chain runs to 319 residues: Taste receptor type 2 member 30 (319 aa).

Position 1 (Met-1) is a topological domain, extracellular. A helical membrane pass occupies residues 2–22; the sequence is ITFLPIIFSILIVVIFVVGNF. Topologically, residues 23 to 46 are cytoplasmic; it reads ANGFIALVNSIEWVKRQKISFVDQ. Residues 47–67 traverse the membrane as a helical segment; that stretch reads ILTALAVSRVGLLWVLLLHWY. Over 68–86 the chain is Extracellular; sequence ATQLNPAFYSVEVRITVYN. The helical transmembrane segment at 87-107 threads the bilayer; that stretch reads VWAVTNHFSSWLATSLSMFYL. Residues 108 to 126 lie on the Cytoplasmic side of the membrane; it reads LKIANFSNLIFLRIKRRVK. The chain crosses the membrane as a helical span at residues 127–147; the sequence is SVVLVILLGPLLFLVCHLFVI. At 148–178 the chain is on the extracellular side; sequence NMDETIWTKEYEGNMTWKIKLKSAMYHSNMT. 2 N-linked (GlcNAc...) asparagine glycosylation sites follow: Asn-161 and Asn-176. The helical transmembrane segment at 179–199 threads the bilayer; the sequence is LTILANFVPLTLTLISFLLLI. The Cytoplasmic segment spans residues 200–229; it reads CSLCKHLKKMQLHGKGSQDPSTKVHIKALQ. Residues 230–250 traverse the membrane as a helical segment; sequence TVTSFLLLCAIYFLSMIISVC. The Extracellular portion of the chain corresponds to 251–259; the sequence is NLGRLQKQP. The helical transmembrane segment at 260–280 threads the bilayer; the sequence is VFMFCQAIIFSYPSTHPFILI. Residues 281–319 lie on the Cytoplasmic side of the membrane; that stretch reads LGNKKLKQIFLSVLWHVRYWVKDRSLRLHRFTRAALCKG.

This sequence belongs to the G-protein coupled receptor T2R family.

It is found in the membrane. Functionally, receptor that may play a role in the perception of bitterness and is gustducin-linked. May play a role in sensing the chemical composition of the gastrointestinal content. The activity of this receptor may stimulate alpha gustducin, mediate PLC-beta-2 activation and lead to the gating of TRPM5. This Pan paniscus (Pygmy chimpanzee) protein is Taste receptor type 2 member 30 (TAS2R30).